The following is a 156-amino-acid chain: MVRRFKPAVKYRRGSRTHGWGRVGQHRKSGSSGGKGMVGFHKHKWSLVMKYGESGTGWPFYGKHGFKQPPTIAIEWRPINVGSLSDIIKELKKEGKIAEEGGKYVIRLLELGYNKLLGGGHIDVPVIVYTPAASRTAVEKIEKAGGEVRIIPLIHK.

The tract at residues 14 to 35 (GSRTHGWGRVGQHRKSGSSGGK) is disordered.

It belongs to the universal ribosomal protein uL15 family. In terms of assembly, part of the 50S ribosomal subunit.

In terms of biological role, binds to the 23S rRNA. In Pyrobaculum islandicum (strain DSM 4184 / JCM 9189 / GEO3), this protein is Large ribosomal subunit protein uL15.